The chain runs to 577 residues: MWYPGDEDEEFTSIIENIEKKETQEIKIKTEKLRQASLNQLPIEQSEGVGGGELSEYNNNTTNNNTPTNTTTTTNTNTTTMNNSNNNNERILSTSNGFDIRLPPNSIEQPSPSFISSSQDGVLTVDPLAVDGEKGNKESQSPPNGDNQILNNNNMFFKDITSLPSTDNKSSTNTNNNNNENPLKQTISSSPSKSTTTTTTSTSTTTTPSLSSLSSNNNNNSNSNNNYINHSSISTVSEGLENLNLKSGIKKIDSETEKYIEEGKQVFVNFLKGHTCYDVIPISGKVVVLDTKLAVKSAFYALEENGIKSAPLWNSEQHDFTGMITVSDFIDILLYYYKKPKSNNIFQDMGIHRIETFWREISVERPSSLISTEPETNLYDAASLLLCYKIHRLPVVDKKDTNSILHILTHSRILAFMMKSFPQLPEKLLSIPIGSLGIGTFATVVTVMTHTPLVEVLELLSEKKISAVPIIDSETSKIVDVYSKSDVTLMSKQGILSPSDLNLPVHQVLSTFTKLWQRPEQIYTCTRFDKLGDVIERCIKKRVHRLVCIDSSKKVEGILSLSDILNYLLNDVKSINH.

Positions 45-226 (QSEGVGGGEL…NNNNSNSNNN (182 aa)) are disordered. Low complexity predominate over residues 58–88 (NNNTTNNNTPTNTTTTTNTNTTTMNNSNNNN). Composition is skewed to polar residues over residues 106–121 (SIEQPSPSFISSSQDG) and 138–155 (ESQSPPNGDNQILNNNNM). Over residues 165–226 (STDNKSSTNT…NNNNSNSNNN (62 aa)) the composition is skewed to low complexity. CBS domains lie at 279 to 341 (VIPI…KKPK), 364 to 426 (ERPS…QLPE), 438 to 499 (IGTF…LSPS), and 517 to 574 (QRPE…DVKS).

The protein belongs to the 5'-AMP-activated protein kinase gamma subunit family.

Its function is as follows. AMPK may be responsible for the regulation of fatty acid synthesis by phosphorylation of acetyl-CoA carboxylase. This is 5'-AMP-activated protein kinase subunit gamma (prkag) from Dictyostelium discoideum (Social amoeba).